The chain runs to 319 residues: Cytochrome c biogenesis protein CcsA (319 aa).

Helical transmembrane passes span 9–29 (ILTH…LITL), 44–64 (GMIV…ASSG), 68–88 (LSNL…LHTI), 143–163 (MLLS…ILII), 223–243 (VISL…VWAN), 257–271 (TWAF…IYLH), and 286–306 (VASI…LLGI).

Belongs to the CcmF/CycK/Ccl1/NrfE/CcsA family. As to quaternary structure, may interact with Ccs1.

The protein localises to the plastid. It is found in the chloroplast thylakoid membrane. Functionally, required during biogenesis of c-type cytochromes (cytochrome c6 and cytochrome f) at the step of heme attachment. This chain is Cytochrome c biogenesis protein CcsA, found in Agrostis stolonifera (Creeping bentgrass).